The sequence spans 255 residues: ATP synthase subunit b 1 (255 aa).

A helical membrane pass occupies residues 5 to 22 (WITVAAQIVNFLLLIWLL).

Belongs to the ATPase B chain family. In terms of assembly, F-type ATPases have 2 components, F(1) - the catalytic core - and F(0) - the membrane proton channel. F(1) has five subunits: alpha(3), beta(3), gamma(1), delta(1), epsilon(1). F(0) has three main subunits: a(1), b(2) and c(10-14). The alpha and beta chains form an alternating ring which encloses part of the gamma chain. F(1) is attached to F(0) by a central stalk formed by the gamma and epsilon chains, while a peripheral stalk is formed by the delta and b chains.

It is found in the cell inner membrane. F(1)F(0) ATP synthase produces ATP from ADP in the presence of a proton or sodium gradient. F-type ATPases consist of two structural domains, F(1) containing the extramembraneous catalytic core and F(0) containing the membrane proton channel, linked together by a central stalk and a peripheral stalk. During catalysis, ATP synthesis in the catalytic domain of F(1) is coupled via a rotary mechanism of the central stalk subunits to proton translocation. Functionally, component of the F(0) channel, it forms part of the peripheral stalk, linking F(1) to F(0). The chain is ATP synthase subunit b 1 from Dinoroseobacter shibae (strain DSM 16493 / NCIMB 14021 / DFL 12).